A 309-amino-acid chain; its full sequence is Taste receptor type 2 member 114 (309 aa).

Topologically, residues 1-7 (MLGAMEG) are extracellular. Residues 8-28 (VLLSVATSEALLGIVGNTFIA) form a helical membrane-spanning segment. At 29 to 43 (LVNCMDCTRNKNLYN) the chain is on the cytoplasmic side. A helical transmembrane segment spans residues 44 to 64 (IGFILTGLAISRICLVWILIT). The Extracellular segment spans residues 65–87 (EAYIKIFSPQLLSPINIIELISY). Residues 88–108 (LWIITSQLNVWFATSLSIFYF) traverse the membrane as a helical segment. Topologically, residues 109 to 127 (LKIANFSHHIFLWLKRRIN) are cytoplasmic. The helical transmembrane segment at 128–148 (IVFAFLIGCLLMSWLFSFPVV) threads the bilayer. Over 149 to 182 (VKMVKDKKMLYINSSWQIHMKKSELIINYVFTNG) the chain is Extracellular. Asparagine 161 is a glycosylation site (N-linked (GlcNAc...) asparagine). A helical transmembrane segment spans residues 183 to 203 (GVFLLFIIMLIVCFLLIISLW). The Cytoplasmic portion of the chain corresponds to 204–233 (RHSKWMQSNESGFRDLNTEVHVKTIKVLLS). A helical transmembrane segment spans residues 234–254 (FIILFILHLIGITINVICLLV). The Extracellular portion of the chain corresponds to 255–259 (PENNL). The helical transmembrane segment at 260 to 280 (LFVFGLTIAFLYPCCHSLILI) threads the bilayer. Over 281-309 (LANSRLKRCFVRILQQLMCSEEGKEFRNT) the chain is Cytoplasmic.

This sequence belongs to the G-protein coupled receptor T2R family.

It is found in the membrane. Putative taste receptor which may play a role in the perception of bitterness. This Rattus norvegicus (Rat) protein is Taste receptor type 2 member 114.